The primary structure comprises 616 residues: Replication protein A 70 kDa DNA-binding subunit (616 aa).

M1 is subject to N-acetylmethionine. Glycyl lysine isopeptide (Lys-Gly) (interchain with G-Cter in ubiquitin) cross-links involve residues K22 and K88. The segment at 121–155 is disordered; the sequence is GLGQPQVAPPAPAASPAASSRPQPQNGTSGAGSTV. Residues 134–145 are compositionally biased toward low complexity; sequence ASPAASSRPQPQ. The span at 146-155 shows a compositional bias: polar residues; that stretch reads NGTSGAGSTV. 2 positions are modified to N6-acetyllysine; alternate: K163 and K167. Residues K163 and K167 each participate in a glycyl lysine isopeptide (Lys-Gly) (interchain with G-Cter in ubiquitin); alternate cross-link. T180 carries the post-translational modification Phosphothreonine. A Glycyl lysine isopeptide (Lys-Gly) (interchain with G-Cter in ubiquitin) cross-link involves residue K183. T191 is subject to Phosphothreonine. The segment at residues 197–281 is a DNA-binding region (OB); the sequence is WTICARVTNK…VKNDYEMTFN (85 aa). Glycyl lysine isopeptide (Lys-Gly) (interchain with G-Cter in ubiquitin) cross-links involve residues K220 and K244. The residue at position 259 (K259) is an N6-acetyllysine; alternate. K259 participates in a covalent cross-link: Glycyl lysine isopeptide (Lys-Gly) (interchain with G-Cter in ubiquitin); alternate. Residues K267 and K331 each participate in a glycyl lysine isopeptide (Lys-Gly) (interchain with G-Cter in ubiquitin) cross-link. Phosphoserine is present on S384. Glycyl lysine isopeptide (Lys-Gly) (interchain with G-Cter in ubiquitin) cross-links involve residues K410 and K431. A Glycyl lysine isopeptide (Lys-Gly) (interchain with G-Cter in SUMO) cross-link involves residue K449. K458 participates in a covalent cross-link: Glycyl lysine isopeptide (Lys-Gly) (interchain with G-Cter in ubiquitin). The C4-type zinc finger occupies 481–503; it reads CPTQDCNKKVIDQQNGLYRCEKC. K553 is covalently cross-linked (Glycyl lysine isopeptide (Lys-Gly) (interchain with G-Cter in ubiquitin)). Residue K577 forms a Glycyl lysine isopeptide (Lys-Gly) (interchain with G-Cter in SUMO) linkage.

This sequence belongs to the replication factor A protein 1 family. In terms of assembly, component of the canonical replication protein A complex (RPA), a heterotrimer composed of RPA1, RPA2 and RPA3. The DNA-binding activity may reside exclusively on the RPA1 subunit. Interacts with PRPF19; the PRP19-CDC5L complex is recruited to the sites of DNA repair where it ubiquitinates the replication protein A complex (RPA). Interacts with RIPK1. Interacts with the polymerase alpha subunit POLA1/p180; this interaction stabilizes the replicative complex and reduces the misincorporation rate of DNA polymerase alpha by acting as a fidelity clamp. Interacts with RAD51 and SENP6 to regulate DNA repair. Interacts with HELB; this interaction promotes HELB recruitment to chromatin following DNA damage. Interacts with PRIMPOL; leading to recruit PRIMPOL on chromatin and stimulate its DNA primase activity. Interacts with XPA; the interaction is direct and associates XPA with the RPA complex. Interacts with ETAA1; the interaction is direct and promotes ETAA1 recruitment at stalled replication forks. Interacts with RPA1; this interaction associates HROB with the RPA complex. Interacts (when poly-ADP-ribosylated) with HTATSF1. DNA damage-induced 'Lys-63'-linked polyubiquitination by PRPF19 mediates ATRIP recruitment to the RPA complex at sites of DNA damage and activation of ATR. Ubiquitinated by RFWD3 at stalled replication forks in response to DNA damage: ubiquitination by RFWD3 does not lead to degradation by the proteasome and promotes removal of the RPA complex from stalled replication forks, promoting homologous recombination. In terms of processing, sumoylated on lysine residues Lys-449 and Lys-577, with Lys-449 being the major site. Sumoylation promotes recruitment of RAD51 to the DNA damage foci to initiate DNA repair through homologous recombination. Desumoylated by SENP6. Post-translationally, poly-ADP-ribosylated by PARP1; promoting recruitment of HTATSF1.

It is found in the nucleus. It localises to the PML body. In terms of biological role, as part of the heterotrimeric replication protein A complex (RPA/RP-A), binds and stabilizes single-stranded DNA intermediates, that form during DNA replication or upon DNA stress. It prevents their reannealing and in parallel, recruits and activates different proteins and complexes involved in DNA metabolism. Thereby, it plays an essential role both in DNA replication and the cellular response to DNA damage. In the cellular response to DNA damage, the RPA complex controls DNA repair and DNA damage checkpoint activation. Through recruitment of ATRIP activates the ATR kinase a master regulator of the DNA damage response. It is required for the recruitment of the DNA double-strand break repair factors RAD51 and RAD52 to chromatin in response to DNA damage. Also recruits to sites of DNA damage proteins like XPA and XPG that are involved in nucleotide excision repair and is required for this mechanism of DNA repair. Also plays a role in base excision repair (BER) probably through interaction with UNG. Also recruits SMARCAL1/HARP, which is involved in replication fork restart, to sites of DNA damage. May also play a role in telomere maintenance. The sequence is that of Replication protein A 70 kDa DNA-binding subunit (RPA1) from Pongo abelii (Sumatran orangutan).